We begin with the raw amino-acid sequence, 123 residues long: MPSTGTLVIIFAIVLILCIMLLFFYKTAEAGKSGVLPPPIPPPTPPPPKKKYDHNEYMEKTDLEPEVKKNHRKWANEAEHLISSSVKGLENLDETAFLANHKGHGFRTFDHAKSLFKEFLKKY.

A helical transmembrane segment spans residues 5–25 (GTLVIIFAIVLILCIMLLFFY). The interval 32 to 53 (KSGVLPPPIPPPTPPPPKKKYD) is disordered. Residues 36–47 (LPPPIPPPTPPP) are compositionally biased toward pro residues.

Belongs to the asfivirus CP123L family.

Its subcellular location is the host membrane. It is found in the virion. This is an uncharacterized protein from Ornithodoros (relapsing fever ticks).